A 914-amino-acid polypeptide reads, in one-letter code: Alanine--tRNA ligase (914 aa).

His-613, His-617, Cys-717, and His-721 together coordinate Zn(2+).

It belongs to the class-II aminoacyl-tRNA synthetase family. The cofactor is Zn(2+).

Its subcellular location is the cytoplasm. The catalysed reaction is tRNA(Ala) + L-alanine + ATP = L-alanyl-tRNA(Ala) + AMP + diphosphate. In terms of biological role, catalyzes the attachment of alanine to tRNA(Ala) in a two-step reaction: alanine is first activated by ATP to form Ala-AMP and then transferred to the acceptor end of tRNA(Ala). Also edits incorrectly charged Ser-tRNA(Ala) and Gly-tRNA(Ala) via its editing domain. The polypeptide is Alanine--tRNA ligase (Pyrococcus furiosus (strain ATCC 43587 / DSM 3638 / JCM 8422 / Vc1)).